Here is a 269-residue protein sequence, read N- to C-terminus: GATA transcription factor 3 (269 aa).

The short motif at 136-143 (KPRTKRSR) is the Nuclear localization signal element. The segment at 176 to 230 (LVFQRRCSHCGTNNTPQWRTGPVGPKTLCNACGVRFKSGRLCPEYRPADSPTFSN) adopts a GATA-type zinc-finger fold. Residues 245-269 (KSKELGEETGEASTKSDPVKFGSKW) form a disordered region.

Belongs to the type IV zinc-finger family. Class A subfamily. As to expression, mostly expressed in roots. Also expressed in stems, flowers and leaves.

It localises to the nucleus. Its function is as follows. Transcriptional activator that specifically binds 5'-GATA-3' or 5'-GAT-3' motifs within gene promoters. May be involved in the regulation of some light-responsive genes. The polypeptide is GATA transcription factor 3 (GATA3) (Arabidopsis thaliana (Mouse-ear cress)).